We begin with the raw amino-acid sequence, 277 residues long: MSSPIPVVVAGALGRMGAEVINAVVNAEDCQLVGAIDNTPGKEGTDVGLELGIKELEVAVTADFEGCLCAVSQSVRNSDQNAVLVDFTHPSVVFDHTRAAIAYGVHPVIGTTGLSPIQLNDLTEFSAKASIGGAVIPNFSVGMVLLQQAAAAAARFYDHAELTELHHNRKADAPSGTCIKTAELMEEVKQSFNPAEVDEHESLQGSRGGVRDSGLNLHSLRLPGLVAHQEVMFGAPGETYTLRHDTIDRSAYMPGVLLTIRKVGSLQQLVYGLERLI.

NAD(+)-binding positions include 11 to 16 and 110 to 112; these read GALGRM and GTT. Catalysis depends on His-166, which acts as the Proton donor/acceptor. A (S)-2,3,4,5-tetrahydrodipicolinate-binding site is contributed by His-167. Lys-170 functions as the Proton donor in the catalytic mechanism. 176 to 177 provides a ligand contact to (S)-2,3,4,5-tetrahydrodipicolinate; the sequence is GT.

This sequence belongs to the DapB family.

It localises to the cytoplasm. It catalyses the reaction (S)-2,3,4,5-tetrahydrodipicolinate + NAD(+) + H2O = (2S,4S)-4-hydroxy-2,3,4,5-tetrahydrodipicolinate + NADH + H(+). The enzyme catalyses (S)-2,3,4,5-tetrahydrodipicolinate + NADP(+) + H2O = (2S,4S)-4-hydroxy-2,3,4,5-tetrahydrodipicolinate + NADPH + H(+). It functions in the pathway amino-acid biosynthesis; L-lysine biosynthesis via DAP pathway; (S)-tetrahydrodipicolinate from L-aspartate: step 4/4. Catalyzes the conversion of 4-hydroxy-tetrahydrodipicolinate (HTPA) to tetrahydrodipicolinate. This chain is 4-hydroxy-tetrahydrodipicolinate reductase, found in Synechococcus sp. (strain CC9902).